The following is a 169-amino-acid chain: MPLLDSFTVDHTRMQAPAVRVAKQMRTPHGDPITVFDLRFCVPNQEILPERGIHTLEHLFAGFMRDHLNGSDVEIIDISPMGCRTGFYMCLIGTPDEARVAAAWSAAMEDVLKVVDQAKIPELNEYQCGTYQMHSLEEAHEIARAILAHGVGVNKNAELALPSDKLASL.

Positions 54, 58, and 128 each coordinate Fe cation.

Belongs to the LuxS family. In terms of assembly, homodimer. It depends on Fe cation as a cofactor.

It catalyses the reaction S-(5-deoxy-D-ribos-5-yl)-L-homocysteine = (S)-4,5-dihydroxypentane-2,3-dione + L-homocysteine. Its function is as follows. Involved in the synthesis of autoinducer 2 (AI-2) which is secreted by bacteria and is used to communicate both the cell density and the metabolic potential of the environment. The regulation of gene expression in response to changes in cell density is called quorum sensing. Catalyzes the transformation of S-ribosylhomocysteine (RHC) to homocysteine (HC) and 4,5-dihydroxy-2,3-pentadione (DPD). This Tolumonas auensis (strain DSM 9187 / NBRC 110442 / TA 4) protein is S-ribosylhomocysteine lyase.